The sequence spans 250 residues: 2,3-bisphosphoglycerate-dependent phosphoglycerate mutase (250 aa).

Residues 8–15, 21–22, Arg60, 87–90, Lys98, 114–115, and 183–184 each bind substrate; these read RHGQSAWN, TG, ERHY, RR, and GN. His9 functions as the Tele-phosphohistidine intermediate in the catalytic mechanism. Catalysis depends on Glu87, which acts as the Proton donor/acceptor.

It belongs to the phosphoglycerate mutase family. BPG-dependent PGAM subfamily. Homodimer.

It carries out the reaction (2R)-2-phosphoglycerate = (2R)-3-phosphoglycerate. It participates in carbohydrate degradation; glycolysis; pyruvate from D-glyceraldehyde 3-phosphate: step 3/5. Catalyzes the interconversion of 2-phosphoglycerate and 3-phosphoglycerate. This is 2,3-bisphosphoglycerate-dependent phosphoglycerate mutase from Nitratidesulfovibrio vulgaris (strain ATCC 29579 / DSM 644 / CCUG 34227 / NCIMB 8303 / VKM B-1760 / Hildenborough) (Desulfovibrio vulgaris).